The primary structure comprises 482 residues: MWIKSVCLFATIAGCLGQRGGPYKVPDAKLEAIYPKGLRVSVPDDGYSLFAFHGKLNEEMEGLEAGHWSRDITKAKQGRWIFRDRNAELKLGDKIYFWTYVIKDGLGYRQDNGEWTVTEFVNENGTVVDTSTAPPPVAPAVSEEDQSPGPQWRPCERSLTESLARERVCKGSLVFSEDFDGSSLADLGNWTAEVRFPGEPDYPYNLYTTDGTVGFESGSLVVRPVMTESKYHEGIIYDRLDLERCTGQLGTLECRRESSGGQIVPPVMTAKLATRRSFAFKFGRIDIKAKMPRGDWLIPELNLEPLDNIYGNQRYASGLMRVAFVRGNDVYAKKLYGGPIMSDADPFRSMLLKDKQGLANWNNDYHVYSLLWKPNGLELMVDGEVYGTIDAGDGFYQIAKNNLVSHASQWLKGTVMAPFDEKFFITLGLRVAGIHDFTDGPGKPWENKGTKAMINFWNNRFRWFPTWHDTSLKVDYVRVYAL.

The first 18 residues, 1–18 (MWIKSVCLFATIAGCLGQ), serve as a signal peptide directing secretion. The 100-residue stretch at 23–122 (YKVPDAKLEA…GEWTVTEFVN (100 aa)) folds into the CBM39 domain. Asn-124 carries N-linked (GlcNAc...) asparagine glycosylation. The tract at residues 127-153 (VVDTSTAPPPVAPAVSEEDQSPGPQWR) is disordered. In terms of domain architecture, GH16 spans 128–482 (VDTSTAPPPV…KVDYVRVYAL (355 aa)). The N-linked (GlcNAc...) asparagine glycan is linked to Asn-189.

As to quaternary structure, monomer. Post-translationally, N-glycosylated. Cuticle and fat body.

It is found in the secreted. Functionally, involved in the recognition of invading microorganisms. Binds specifically to beta-1,3-glucan and lipoteichoic acid and causes aggregation of invading microorganisms. Binding to beta-1,3-glucan activates the phenoloxidase cascade. The polypeptide is Beta-1,3-glucan-binding protein 2 (Manduca sexta (Tobacco hawkmoth)).